We begin with the raw amino-acid sequence, 493 residues long: 3-octaprenyl-4-hydroxybenzoate carboxy-lyase (493 aa).

Asn-172 provides a ligand contact to Mn(2+). Prenylated FMN-binding positions include 175–177 (IYR), 189–191 (RWL), and 194–195 (RG). Mn(2+) is bound at residue Glu-238. The Proton donor role is filled by Asp-287.

It belongs to the UbiD family. In terms of assembly, homohexamer. Requires prenylated FMN as cofactor. The cofactor is Mn(2+).

The protein resides in the cell membrane. It carries out the reaction a 4-hydroxy-3-(all-trans-polyprenyl)benzoate + H(+) = a 2-(all-trans-polyprenyl)phenol + CO2. Its pathway is cofactor biosynthesis; ubiquinone biosynthesis. Catalyzes the decarboxylation of 3-octaprenyl-4-hydroxy benzoate to 2-octaprenylphenol, an intermediate step in ubiquinone biosynthesis. The sequence is that of 3-octaprenyl-4-hydroxybenzoate carboxy-lyase from Cellvibrio japonicus (strain Ueda107) (Pseudomonas fluorescens subsp. cellulosa).